We begin with the raw amino-acid sequence, 322 residues long: Beta-ketoacyl-[acyl-carrier-protein] synthase III (322 aa).

Residues Cys-112 and His-249 contribute to the active site. The tract at residues 250–254 (QANQR) is ACP-binding. The active site involves Asn-279.

This sequence belongs to the thiolase-like superfamily. FabH family. Homodimer.

The protein localises to the cytoplasm. It carries out the reaction malonyl-[ACP] + acetyl-CoA + H(+) = 3-oxobutanoyl-[ACP] + CO2 + CoA. It participates in lipid metabolism; fatty acid biosynthesis. Functionally, catalyzes the condensation reaction of fatty acid synthesis by the addition to an acyl acceptor of two carbons from malonyl-ACP. Catalyzes the first condensation reaction which initiates fatty acid synthesis and may therefore play a role in governing the total rate of fatty acid production. Possesses both acetoacetyl-ACP synthase and acetyl transacylase activities. Its substrate specificity determines the biosynthesis of branched-chain and/or straight-chain of fatty acids. This is Beta-ketoacyl-[acyl-carrier-protein] synthase III from Caulobacter vibrioides (strain ATCC 19089 / CIP 103742 / CB 15) (Caulobacter crescentus).